The primary structure comprises 138 residues: Large ribosomal subunit protein bL17 (138 aa).

The protein belongs to the bacterial ribosomal protein bL17 family. As to quaternary structure, part of the 50S ribosomal subunit. Contacts protein L32.

The polypeptide is Large ribosomal subunit protein bL17 (Methylorubrum populi (strain ATCC BAA-705 / NCIMB 13946 / BJ001) (Methylobacterium populi)).